The following is a 126-amino-acid chain: MLAVPVRLKVGSRKPEWGTNRLTSCPAKDPLDRRLQNLRDRERVPEPQRSLRPGVQEDSREHGQVPEVSDPQVDLEFVDLQAKPRYRRLILKTQIPEASDSQAAQKPQAHRQIPETTEAGRETTSN.

2 disordered regions span residues 15–72 (PEWG…SDPQ) and 93–126 (TQIP…TTSN). 2 stretches are compositionally biased toward basic and acidic residues: residues 29 to 46 (DPLD…RVPE) and 55 to 64 (VQEDSREHGQ).

This is an uncharacterized protein from Homo sapiens (Human).